The primary structure comprises 206 residues: Nucleoside triphosphate pyrophosphatase (206 aa).

The active-site Proton acceptor is D76.

Belongs to the Maf family. A divalent metal cation is required as a cofactor.

The protein localises to the cytoplasm. The enzyme catalyses a ribonucleoside 5'-triphosphate + H2O = a ribonucleoside 5'-phosphate + diphosphate + H(+). It carries out the reaction a 2'-deoxyribonucleoside 5'-triphosphate + H2O = a 2'-deoxyribonucleoside 5'-phosphate + diphosphate + H(+). Nucleoside triphosphate pyrophosphatase. May have a dual role in cell division arrest and in preventing the incorporation of modified nucleotides into cellular nucleic acids. This Streptomyces coelicolor (strain ATCC BAA-471 / A3(2) / M145) protein is Nucleoside triphosphate pyrophosphatase.